Consider the following 708-residue polypeptide: Leukotoxin translocation ATP-binding protein LktB (708 aa).

A Peptidase C39 domain is found at 1-126 (MEANHQRNDL…ACYQGQLILV (126 aa)). Residues 155-437 (FLETLIVSIF…LAQLWQDFQQ (283 aa)) enclose the ABC transmembrane type-1 domain. Transmembrane regions (helical) follow at residues 159–179 (LIVS…FQVV), 192–212 (LNII…LSGL), 270–290 (ALTS…MWYY), 296–316 (LVIL…SPIL), and 389–409 (VMVI…LSIG). Residues 469 to 704 (ISFKNIRFRY…SNGLYSYLHQ (236 aa)) enclose the ABC transporter domain. 503-510 (GRSGSGKS) serves as a coordination point for ATP.

Belongs to the ABC transporter superfamily. Protein-1 exporter (TC 3.A.1.109) family. Homodimer.

It is found in the cell inner membrane. It catalyses the reaction ATP + H2O + proteinSide 1 = ADP + phosphate + proteinSide 2.. Part of the ABC transporter complex LktBD involved in leukotoxin export. Transmembrane domains (TMD) form a pore in the inner membrane and the ATP-binding domain (NBD) is responsible for energy generation. This is Leukotoxin translocation ATP-binding protein LktB (lktB) from Mannheimia haemolytica (Pasteurella haemolytica).